A 404-amino-acid chain; its full sequence is S-adenosylmethionine synthase (404 aa).

Positions 1–13 are enriched in polar residues; sequence MSQSRYFFTSESV. The disordered stretch occupies residues 1–21; sequence MSQSRYFFTSESVSEGHPDKV. Residue H17 coordinates ATP. D19 is a binding site for Mg(2+). E45 serves as a coordination point for K(+). 2 residues coordinate L-methionine: E58 and Q101. The interval 101-111 is flexible loop; it reads QSPDINRGVDR. ATP contacts are provided by residues 172 to 174, 245 to 246, D254, 260 to 261, A277, and K281; these read DAK, RF, and RK. D254 provides a ligand contact to L-methionine. K285 provides a ligand contact to L-methionine.

Belongs to the AdoMet synthase family. Homotetramer; dimer of dimers. Requires Mg(2+) as cofactor. It depends on K(+) as a cofactor.

It is found in the cytoplasm. The enzyme catalyses L-methionine + ATP + H2O = S-adenosyl-L-methionine + phosphate + diphosphate. Its pathway is amino-acid biosynthesis; S-adenosyl-L-methionine biosynthesis; S-adenosyl-L-methionine from L-methionine: step 1/1. Catalyzes the formation of S-adenosylmethionine (AdoMet) from methionine and ATP. The overall synthetic reaction is composed of two sequential steps, AdoMet formation and the subsequent tripolyphosphate hydrolysis which occurs prior to release of AdoMet from the enzyme. This is S-adenosylmethionine synthase from Chlorobium phaeobacteroides (strain DSM 266 / SMG 266 / 2430).